The following is a 582-amino-acid chain: uncharacterized protein (582 aa).

The N-terminal stretch at 1-27 (MNYAVLPPELNSLRMFTGAGSAPMLAA) is a signal peptide. Gly residues predominate over residues 241–257 (GNGRAGLPGSGNVGNGN). Residues 241–278 (GNGRAGLPGSGNVGNGNLGNSNLGSGNTGNSNVGFGNT) form a disordered region. Residues 258-278 (LGNSNLGSGNTGNSNVGFGNT) are compositionally biased toward low complexity.

The protein belongs to the mycobacterial PPE family.

This is an uncharacterized protein from Mycobacterium tuberculosis (strain ATCC 25618 / H37Rv).